A 249-amino-acid chain; its full sequence is Cytoplasmic envelopment protein 1 (249 aa).

Belongs to the herpesviridae cytoplasmic envelopment protein 1 family.

It localises to the virion. The protein localises to the virion tegument. The protein resides in the host cytoplasm. It is found in the host Golgi apparatus. Functionally, plays a critical role in cytoplasmic virus egress. Participates in the final step of tegumentation and envelope acquisition within the host cytoplasm. This chain is Cytoplasmic envelopment protein 1 (U75), found in Human herpesvirus 6A (strain Uganda-1102) (HHV-6 variant A).